The sequence spans 89 residues: Small ribosomal subunit protein uS15 (89 aa).

The protein belongs to the universal ribosomal protein uS15 family. Part of the 30S ribosomal subunit. Forms a bridge to the 50S subunit in the 70S ribosome, contacting the 23S rRNA.

Its function is as follows. One of the primary rRNA binding proteins, it binds directly to 16S rRNA where it helps nucleate assembly of the platform of the 30S subunit by binding and bridging several RNA helices of the 16S rRNA. Functionally, forms an intersubunit bridge (bridge B4) with the 23S rRNA of the 50S subunit in the ribosome. The sequence is that of Small ribosomal subunit protein uS15 from Pelodictyon phaeoclathratiforme (strain DSM 5477 / BU-1).